The primary structure comprises 991 residues: Polyribonucleotide nucleotidyltransferase 2, mitochondrial (991 aa).

The N-terminal 39 residues, 1 to 39 (MSSIVNRASSASLPNFLAWRALGFRTICSGRLGFAPSVP), are a transit peptide targeting the mitochondrion. The region spanning 609-667 (PRLATLKYSNDSLRTLIGPMGVLKRKIEVETGARLSIDNGTLTIVAKNQDVMEKAQEQV) is the KH domain. Residues 678 to 746 (GGVYKGTVSS…VRGNIKLSRK (69 aa)) form the S1 motif 1 domain. Residues 813–865 (EAEKSSPVNDNDKPRRAATSKPDRKPKSTASKLIATQKEEEALESIAPEETSA) form a disordered region. Over residues 822-838 (DNDKPRRAATSKPDRKP) the composition is skewed to basic and acidic residues. The 63-residue stretch at 925–987 (GTEMTATVDH…GVPVMALVDE (63 aa)) folds into the S1 motif 2 domain.

This sequence belongs to the polyribonucleotide nucleotidyltransferase family.

It is found in the mitochondrion. The enzyme catalyses RNA(n+1) + phosphate = RNA(n) + a ribonucleoside 5'-diphosphate. Involved in the 3'-end maturation of mitochondrial mRNAs, rRNAs and tRNAs. Functions as a poly(A) mRNA 3'-5' degrading phosphorylase and is required for the degradation of highly expressed transcripts of non-coding regions. The chain is Polyribonucleotide nucleotidyltransferase 2, mitochondrial (PNP2) from Arabidopsis thaliana (Mouse-ear cress).